A 144-amino-acid polypeptide reads, in one-letter code: Transcriptional regulator SlyA (144 aa).

Residues E2 to K135 enclose the HTH marR-type domain. The H-T-H motif DNA-binding region spans Q49–E72.

It belongs to the SlyA family. As to quaternary structure, homodimer.

Its function is as follows. Transcription regulator that can specifically activate or repress expression of target genes. In Blochmanniella pennsylvanica (strain BPEN), this protein is Transcriptional regulator SlyA.